The following is a 146-amino-acid chain: Large ribosomal subunit protein uL15 (146 aa).

Residues 1 to 18 (MKLHELKPSEGSRKERNR) are compositionally biased toward basic and acidic residues. The segment at 1–50 (MKLHELKPSEGSRKERNRVGRGTGSGNGKTSGRGHKGQKARSGGGVRLGF) is disordered. A compositionally biased stretch (gly residues) spans 21–31 (RGTGSGNGKTS).

It belongs to the universal ribosomal protein uL15 family. As to quaternary structure, part of the 50S ribosomal subunit.

Functionally, binds to the 23S rRNA. The sequence is that of Large ribosomal subunit protein uL15 from Listeria welshimeri serovar 6b (strain ATCC 35897 / DSM 20650 / CCUG 15529 / CIP 8149 / NCTC 11857 / SLCC 5334 / V8).